Consider the following 271-residue polypeptide: Sedoheptulose 1,7-bisphosphatase (271 aa).

Arginine 12 serves as a coordination point for substrate. The active-site Tele-phosphohistidine intermediate is the histidine 13. Substrate-binding positions include 24–25 (YT), arginine 69, 99–102 (EWEY), arginine 181, and histidine 244. Catalysis depends on glutamate 99, which acts as the Proton donor/acceptor.

The protein belongs to the phosphoglycerate mutase family. SHB17 subfamily. In terms of assembly, homodimer.

The protein localises to the cytoplasm. The protein resides in the nucleus. It catalyses the reaction D-sedoheptulose 1,7-bisphosphate + H2O = D-sedoheptulose 7-phosphate + phosphate. Its function is as follows. Sedoheptulose 1,7-bisphosphatase involved in riboneogenesis. Dephosphorylates sedoheptulose 1,7-bisphosphate (SBP), which is converted via the non-oxidative pentose phosphate pathway to ribose-5-phosphate. Has a fructose 1,6-bisphosphatase activity in vitro, but this is probably not biologically relevant, since deletion does not affect fructose 1,6-biphosphate (FBP) levels. The protein is Sedoheptulose 1,7-bisphosphatase (SHB17) of Saccharomyces cerevisiae (strain ATCC 204508 / S288c) (Baker's yeast).